The sequence spans 364 residues: UDP-N-acetylglucosamine--N-acetylmuramyl-(pentapeptide) pyrophosphoryl-undecaprenol N-acetylglucosamine transferase (364 aa).

Residues 10-12, Asn-124, Ser-195, and Gln-295 contribute to the UDP-N-acetyl-alpha-D-glucosamine site; that span reads TGG.

Belongs to the glycosyltransferase 28 family. MurG subfamily.

The protein localises to the cell membrane. The enzyme catalyses di-trans,octa-cis-undecaprenyl diphospho-N-acetyl-alpha-D-muramoyl-L-alanyl-D-glutamyl-meso-2,6-diaminopimeloyl-D-alanyl-D-alanine + UDP-N-acetyl-alpha-D-glucosamine = di-trans,octa-cis-undecaprenyl diphospho-[N-acetyl-alpha-D-glucosaminyl-(1-&gt;4)]-N-acetyl-alpha-D-muramoyl-L-alanyl-D-glutamyl-meso-2,6-diaminopimeloyl-D-alanyl-D-alanine + UDP + H(+). Its pathway is cell wall biogenesis; peptidoglycan biosynthesis. Functionally, cell wall formation. Catalyzes the transfer of a GlcNAc subunit on undecaprenyl-pyrophosphoryl-MurNAc-pentapeptide (lipid intermediate I) to form undecaprenyl-pyrophosphoryl-MurNAc-(pentapeptide)GlcNAc (lipid intermediate II). The chain is UDP-N-acetylglucosamine--N-acetylmuramyl-(pentapeptide) pyrophosphoryl-undecaprenol N-acetylglucosamine transferase from Bacillus pumilus (strain SAFR-032).